Consider the following 725-residue polypeptide: Polyribonucleotide nucleotidyltransferase (725 aa).

Mg(2+) is bound by residues Asp506 and Asp512. Residues 571–631 form the KH domain; the sequence is PLIEQFAIDP…QNIIDACEHI (61 aa). The S1 motif domain occupies 657–724; sequence DEVVIGKVER…KKDRIELSSA (68 aa).

Belongs to the polyribonucleotide nucleotidyltransferase family. It depends on Mg(2+) as a cofactor.

It is found in the cytoplasm. The enzyme catalyses RNA(n+1) + phosphate = RNA(n) + a ribonucleoside 5'-diphosphate. In terms of biological role, involved in mRNA degradation. Catalyzes the phosphorolysis of single-stranded polyribonucleotides processively in the 3'- to 5'-direction. This is Polyribonucleotide nucleotidyltransferase from Aliarcobacter butzleri (strain RM4018) (Arcobacter butzleri).